The following is a 329-amino-acid chain: 4-hydroxythreonine-4-phosphate dehydrogenase (329 aa).

Residues His136 and Thr137 each contribute to the substrate site. 3 residues coordinate a divalent metal cation: His166, His211, and His266. Substrate is bound by residues Lys274, Asn283, and Arg292.

The protein belongs to the PdxA family. Homodimer. The cofactor is Zn(2+). Requires Mg(2+) as cofactor. Co(2+) serves as cofactor.

The protein localises to the cytoplasm. The enzyme catalyses 4-(phosphooxy)-L-threonine + NAD(+) = 3-amino-2-oxopropyl phosphate + CO2 + NADH. It participates in cofactor biosynthesis; pyridoxine 5'-phosphate biosynthesis; pyridoxine 5'-phosphate from D-erythrose 4-phosphate: step 4/5. In terms of biological role, catalyzes the NAD(P)-dependent oxidation of 4-(phosphooxy)-L-threonine (HTP) into 2-amino-3-oxo-4-(phosphooxy)butyric acid which spontaneously decarboxylates to form 3-amino-2-oxopropyl phosphate (AHAP). The sequence is that of 4-hydroxythreonine-4-phosphate dehydrogenase from Escherichia coli O17:K52:H18 (strain UMN026 / ExPEC).